The chain runs to 427 residues: Septin-8 (427 aa).

The Septin-type G domain maps to 39–305 (QGFCFNILCV…ELYRRCKLEE (267 aa)). The interval 49 to 56 (GETGIGKS) is G1 motif. GTP is bound by residues 49 to 56 (GETGIGKS), Gly-104, 185 to 193 (KADTISKSE), Gly-239, and Arg-254. The G3 motif stretch occupies residues 101-104 (DTVG). The tract at residues 184-187 (AKAD) is G4 motif. A coiled-coil region spans residues 321–409 (QETYEAKRKE…KAAMEALQSQ (89 aa)). The tract at residues 373–427 (RVHQEESKKVEDKRRDLEEEMNSFNRRKAAMEALQSQSFQATSQQPLKKDKDRKN) is disordered. The segment covering 374-389 (VHQEESKKVEDKRRDL) has biased composition (basic and acidic residues). A compositionally biased stretch (polar residues) spans 406-418 (LQSQSFQATSQQP).

Belongs to the TRAFAC class TrmE-Era-EngA-EngB-Septin-like GTPase superfamily. Septin GTPase family.

It is found in the cytoplasm. The protein resides in the cytoskeleton. The protein localises to the synapse. It localises to the cell projection. Its subcellular location is the axon. It is found in the cytoplasmic vesicle. The protein resides in the secretory vesicle. The protein localises to the synaptic vesicle membrane. It localises to the presynapse. This Xenopus tropicalis (Western clawed frog) protein is Septin-8.